The sequence spans 170 residues: Adenine phosphoribosyltransferase (170 aa).

The protein belongs to the purine/pyrimidine phosphoribosyltransferase family. As to quaternary structure, homodimer.

The protein localises to the cytoplasm. The enzyme catalyses AMP + diphosphate = 5-phospho-alpha-D-ribose 1-diphosphate + adenine. The protein operates within purine metabolism; AMP biosynthesis via salvage pathway; AMP from adenine: step 1/1. Its function is as follows. Catalyzes a salvage reaction resulting in the formation of AMP, that is energically less costly than de novo synthesis. This is Adenine phosphoribosyltransferase from Lactococcus lactis subsp. lactis (strain IL1403) (Streptococcus lactis).